The chain runs to 94 residues: Pyrimidine/purine nucleoside phosphorylase (94 aa).

It belongs to the nucleoside phosphorylase PpnP family.

It catalyses the reaction a purine D-ribonucleoside + phosphate = a purine nucleobase + alpha-D-ribose 1-phosphate. The enzyme catalyses adenosine + phosphate = alpha-D-ribose 1-phosphate + adenine. The catalysed reaction is cytidine + phosphate = cytosine + alpha-D-ribose 1-phosphate. It carries out the reaction guanosine + phosphate = alpha-D-ribose 1-phosphate + guanine. It catalyses the reaction inosine + phosphate = alpha-D-ribose 1-phosphate + hypoxanthine. The enzyme catalyses thymidine + phosphate = 2-deoxy-alpha-D-ribose 1-phosphate + thymine. The catalysed reaction is uridine + phosphate = alpha-D-ribose 1-phosphate + uracil. It carries out the reaction xanthosine + phosphate = alpha-D-ribose 1-phosphate + xanthine. Functionally, catalyzes the phosphorolysis of diverse nucleosides, yielding D-ribose 1-phosphate and the respective free bases. Can use uridine, adenosine, guanosine, cytidine, thymidine, inosine and xanthosine as substrates. Also catalyzes the reverse reactions. The chain is Pyrimidine/purine nucleoside phosphorylase from Salmonella paratyphi C (strain RKS4594).